Reading from the N-terminus, the 378-residue chain is S-adenosylmethionine synthase (378 aa).

H15 is a binding site for ATP. D17 contacts Mg(2+). E43 provides a ligand contact to K(+). L-methionine is bound by residues E56 and Q99. A flexible loop region spans residues 99–109 (QSPDINQGINR). Residues 164–166 (DAK), 230–231 (RF), D239, 245–246 (RK), A262, and K266 contribute to the ATP site. D239 provides a ligand contact to L-methionine. K270 lines the L-methionine pocket.

The protein belongs to the AdoMet synthase family. As to quaternary structure, homotetramer; dimer of dimers. Requires Mg(2+) as cofactor. It depends on K(+) as a cofactor.

It is found in the cytoplasm. The enzyme catalyses L-methionine + ATP + H2O = S-adenosyl-L-methionine + phosphate + diphosphate. The protein operates within amino-acid biosynthesis; S-adenosyl-L-methionine biosynthesis; S-adenosyl-L-methionine from L-methionine: step 1/1. In terms of biological role, catalyzes the formation of S-adenosylmethionine (AdoMet) from methionine and ATP. The overall synthetic reaction is composed of two sequential steps, AdoMet formation and the subsequent tripolyphosphate hydrolysis which occurs prior to release of AdoMet from the enzyme. The protein is S-adenosylmethionine synthase of Buchnera aphidicola subsp. Acyrthosiphon pisum (strain 5A).